Here is a 429-residue protein sequence, read N- to C-terminus: Adenylosuccinate synthetase (429 aa).

Residues 12 to 18 (GDEGKGK) and 40 to 42 (GHT) each bind GTP. Residue D13 is the Proton acceptor of the active site. Mg(2+) is bound by residues D13 and G40. Residues 13 to 16 (DEGK), 38 to 41 (NAGH), T129, R143, Q223, T238, and R302 each bind IMP. H41 functions as the Proton donor in the catalytic mechanism. 298–304 (TVTGRPR) provides a ligand contact to substrate. Residues R304, 330 to 332 (KLD), and 412 to 414 (STS) each bind GTP.

This sequence belongs to the adenylosuccinate synthetase family. As to quaternary structure, homodimer. The cofactor is Mg(2+).

Its subcellular location is the cytoplasm. It catalyses the reaction IMP + L-aspartate + GTP = N(6)-(1,2-dicarboxyethyl)-AMP + GDP + phosphate + 2 H(+). The protein operates within purine metabolism; AMP biosynthesis via de novo pathway; AMP from IMP: step 1/2. In terms of biological role, plays an important role in the de novo pathway of purine nucleotide biosynthesis. Catalyzes the first committed step in the biosynthesis of AMP from IMP. In Paramagnetospirillum magneticum (strain ATCC 700264 / AMB-1) (Magnetospirillum magneticum), this protein is Adenylosuccinate synthetase.